A 451-amino-acid chain; its full sequence is Gamma-aminobutyric acid receptor subunit alpha-2 (451 aa).

Positions 1–28 are cleaved as a signal peptide; the sequence is MKTKLNIYNMQFLLFVFLVWDPARLVLA. Residues 29–249 are Extracellular-facing; that stretch reads NIQEDEAKNN…MTAHFHLKRK (221 aa). Residue Asn38 is glycosylated (N-linked (GlcNAc...) asparagine). Arg94 lines the 4-aminobutanoate pocket. N-linked (GlcNAc...) asparagine glycosylation occurs at Asn138. Residue Thr157 participates in 4-aminobutanoate binding. Cys166 and Cys180 are oxidised to a cystine. The chain crosses the membrane as a helical span at residues 250–270; sequence IGYFVIQTYLPCIMTVILSQV. Over 271 to 280 the chain is Cytoplasmic; that stretch reads SFWLNRESVP. The helical transmembrane segment at 281-300 threads the bilayer; sequence ARTVFGVTTVLTMTTLSISA. Residues 301–311 lie on the Extracellular side of the membrane; that stretch reads RNSLPKVAYAT. Residues 312-332 form a helical membrane-spanning segment; that stretch reads AMDWFIAVCYAFVFSALIEFA. Residues 333–420 lie on the Cytoplasmic side of the membrane; sequence TVNYFTKRGW…FNSVSKIDRM (88 aa). Residues 421-441 form a helical membrane-spanning segment; that stretch reads SRIVFPVLFGTFNLVYWATYL. Over 442-451 the chain is Extracellular; that stretch reads NREPVLGVSP.

Belongs to the ligand-gated ion channel (TC 1.A.9) family. Gamma-aminobutyric acid receptor (TC 1.A.9.5) subfamily. GABRA2 sub-subfamily. Heteropentamer, formed by a combination of alpha (GABRA1-6), beta (GABRB1-3), gamma (GABRG1-3), delta (GABRD), epsilon (GABRE), rho (GABRR1-3), pi (GABRP) and theta (GABRQ) subunits, each subunit exhibiting distinct physiological and pharmacological properties. Interacts with UBQLN1. Interacts with KIF21B. Interacts with LHFPL4. Interacts with SHISA7; interaction leads to the regulation of GABA(A) receptor trafficking, channel deactivation kinetics and pharmacology. Post-translationally, glycosylated.

The protein localises to the postsynaptic cell membrane. It localises to the cell membrane. The protein resides in the cytoplasmic vesicle membrane. It is found in the cell projection. Its subcellular location is the dendrite. It catalyses the reaction chloride(in) = chloride(out). Activated by pentobarbital. Inhibited by the antagonist bicuculline. Functionally, alpha subunit of the heteropentameric ligand-gated chloride channel gated by gamma-aminobutyric acid (GABA), a major inhibitory neurotransmitter in the brain. GABA-gated chloride channels, also named GABA(A) receptors (GABAAR), consist of five subunits arranged around a central pore and contain GABA active binding site(s) located at the alpha and beta subunit interfaces. When activated by GABA, GABAARs selectively allow the flow of chloride anions across the cell membrane down their electrochemical gradient. Chloride influx into the postsynaptic neuron following GABAAR opening decreases the neuron ability to generate a new action potential, thereby reducing nerve transmission. The alpha-2 subunit exhibits synaptogenic activity together with beta-2 and very little to no activity together with beta-3, the gamma-2 subunit being necessary but not sufficient to induce rapid synaptic contacts formation. This is Gamma-aminobutyric acid receptor subunit alpha-2 from Homo sapiens (Human).